The primary structure comprises 312 residues: Ribonuclease Z (312 aa).

Zn(2+) is bound by residues His62, His64, Asp66, His67, His144, Asp215, and His273. The active-site Proton acceptor is Asp66.

The protein belongs to the RNase Z family. In terms of assembly, homodimer. It depends on Zn(2+) as a cofactor.

It catalyses the reaction Endonucleolytic cleavage of RNA, removing extra 3' nucleotides from tRNA precursor, generating 3' termini of tRNAs. A 3'-hydroxy group is left at the tRNA terminus and a 5'-phosphoryl group is left at the trailer molecule.. In terms of biological role, zinc phosphodiesterase, which displays some tRNA 3'-processing endonuclease activity. Probably involved in tRNA maturation, by removing a 3'-trailer from precursor tRNA. This chain is Ribonuclease Z, found in Prochlorococcus marinus (strain MIT 9515).